A 724-amino-acid chain; its full sequence is Protein Aster-A (724 aa).

The segment covering 1-18 has biased composition (low complexity); sequence MFDTTPHSGRSTPSSSPS. The segment at 1–66 is disordered; it reads MFDTTPHSGR…TPSTQSLGSR (66 aa). Polar residues predominate over residues 57-66; the sequence is TPSTQSLGSR. The GRAM domain maps to 91–158; that stretch reads EDFRKLFSKL…KEVTCLKKEK (68 aa). Residues 256 to 336 form a disordered region; that stretch reads SSGAADRSQE…GPTTLGPLDL (81 aa). A phosphoserine mark is found at Ser-263, Ser-267, and Ser-271. Polar residues predominate over residues 300–312; it reads DSQPDASSSQTVT. The span at 326–336 shows a compositional bias: low complexity; it reads DGPTTLGPLDL. The VASt domain occupies 367-538; that stretch reads SGRLLINSVF…ELAKAEKLSL (172 aa). Ser-415 carries the post-translational modification Phosphoserine. Residues 560–579 form a disordered region; sequence SWRAHGDGPQHPDPDPCARA. Basic and acidic residues predominate over residues 563 to 575; sequence AHGDGPQHPDPDP. A helical transmembrane segment spans residues 610–630; it reads LISIVICVSLIILIALNVLLF.

In terms of tissue distribution, expressed in liver.

It is found in the endoplasmic reticulum membrane. The protein resides in the cell membrane. It localises to the cytoplasmic vesicle. Its subcellular location is the autophagosome. Functionally, cholesterol transporter that mediates non-vesicular transport of cholesterol from the plasma membrane (PM) to the endoplasmic reticulum (ER). Contains unique domains for binding cholesterol and the PM, thereby serving as a molecular bridge for the transfer of cholesterol from the PM to the ER. Plays a crucial role in cholesterol homeostasis and has the unique ability to localize to the PM based on the level of membrane cholesterol. In lipid-poor conditions localizes to the ER membrane and in response to excess cholesterol in the PM is recruited to the endoplasmic reticulum-plasma membrane contact sites (EPCS) which is mediated by the GRAM domain. At the EPCS, the sterol-binding VASt/ASTER domain binds to the cholesterol in the PM and facilitates its transfer from the PM to ER. May play a role in tumor progression. Plays a role in autophagy regulation and is required for biogenesis of the autophagosome. This function in autophagy requires its cholesterol-transfer activity. The chain is Protein Aster-A from Homo sapiens (Human).